A 273-amino-acid chain; its full sequence is Inositol monophosphatase 1 (273 aa).

4 residues coordinate Mg(2+): Glu71, Asp91, Val93, and Asp94. Substrate is bound at residue Glu71. Residues 93–96 (VDGT), 194–196 (GSC), and Asp221 each bind substrate. Asp221 serves as a coordination point for Mg(2+).

This sequence belongs to the inositol monophosphatase superfamily. Mg(2+) is required as a cofactor. In terms of tissue distribution, expressed in seedlings, flowers, young and matures green fruits. Detected in roots and stems.

The enzyme catalyses a myo-inositol phosphate + H2O = myo-inositol + phosphate. The protein operates within polyol metabolism; myo-inositol biosynthesis; myo-inositol from D-glucose 6-phosphate: step 2/2. Responsible for the provision of inositol required for synthesis of phosphatidylinositol and polyphosphoinositides. This is Inositol monophosphatase 1 (IMP1) from Solanum lycopersicum (Tomato).